Reading from the N-terminus, the 669-residue chain is Alpha-1,4-glucan:maltose-1-phosphate maltosyltransferase 2 (669 aa).

3 residues coordinate alpha-maltose 1-phosphate: lysine 255, glutamine 315, and aspartate 350. The active-site Nucleophile is the aspartate 385. Residue asparagine 386 participates in alpha-maltose 1-phosphate binding. The active-site Proton donor is glutamate 414. An alpha-maltose 1-phosphate-binding site is contributed by 525 to 526 (KY).

This sequence belongs to the glycosyl hydrolase 13 family. GlgE subfamily. In terms of assembly, homodimer.

It carries out the reaction alpha-maltose 1-phosphate + [(1-&gt;4)-alpha-D-glucosyl](n) = [(1-&gt;4)-alpha-D-glucosyl](n+2) + phosphate. Maltosyltransferase that uses maltose 1-phosphate (M1P) as the sugar donor to elongate linear or branched alpha-(1-&gt;4)-glucans. Maltooligosaccharides with a degree of polymerization (DP) superior or equal to 4 are efficient acceptors, with DP6 being optimal in the GlgE-catalyzed polymerization with M1P. Is probably involved in a branched alpha-glucan biosynthetic pathway from trehalose, together with TreS, Mak and GlgB. In Streptomyces coelicolor (strain ATCC BAA-471 / A3(2) / M145), this protein is Alpha-1,4-glucan:maltose-1-phosphate maltosyltransferase 2 (glgE2).